Consider the following 148-residue polypeptide: Phospholipase A2-alpha (148 aa).

The first 20 residues, 1 to 20 (MAAPIILFSFLLFFSVSVSA), serve as a signal peptide directing secretion. Disulfide bonds link cysteine 38/cysteine 66, cysteine 42/cysteine 72, cysteine 47/cysteine 122, cysteine 59/cysteine 79, cysteine 78/cysteine 105, and cysteine 85/cysteine 98. Residues tyrosine 58, glycine 60, and tyrosine 63 each coordinate Ca(2+). Histidine 82 is a catalytic residue. Aspartate 83 serves as a coordination point for Ca(2+).

The protein belongs to the phospholipase A2 family. In terms of assembly, interacts with MYB30. The cofactor is Ca(2+). Ubiquitous but expressed at a low level.

The protein localises to the secreted. The protein resides in the golgi apparatus. Its subcellular location is the cytoplasmic vesicle. It localises to the nucleus. It carries out the reaction a 1,2-diacyl-sn-glycero-3-phosphocholine + H2O = a 1-acyl-sn-glycero-3-phosphocholine + a fatty acid + H(+). Its function is as follows. PA2 catalyzes the calcium-dependent hydrolysis of the 2-acyl groups in 3-sn-phosphoglycerides. Releases lysophospholipids (LPLs) and free fatty acids (FFAs) from membrane phospholipids in response to hormones and other external stimuli. Modulates the trafficking of PIN proteins to the plasma membrane. Negatively regulates MYB30 transcriptional activity and hypersensitive response control. The sequence is that of Phospholipase A2-alpha from Arabidopsis thaliana (Mouse-ear cress).